Reading from the N-terminus, the 494-residue chain is UPF0371 protein spr0309 (494 aa).

The protein belongs to the UPF0371 family.

The chain is UPF0371 protein spr0309 from Streptococcus pneumoniae (strain ATCC BAA-255 / R6).